Consider the following 265-residue polypeptide: Shikimate dehydrogenase (NADP(+)) (265 aa).

Shikimate is bound by residues 14–16 and Thr-61; that span reads SLS. The active-site Proton acceptor is the Lys-65. Positions 85 and 100 each coordinate shikimate. Residues 123–127, 146–151, and Ala-209 contribute to the NADP(+) site; these read GAGGA and NRTESK. Tyr-211 contributes to the shikimate binding site. Gly-232 lines the NADP(+) pocket.

It belongs to the shikimate dehydrogenase family. As to quaternary structure, homodimer.

The enzyme catalyses shikimate + NADP(+) = 3-dehydroshikimate + NADPH + H(+). Its pathway is metabolic intermediate biosynthesis; chorismate biosynthesis; chorismate from D-erythrose 4-phosphate and phosphoenolpyruvate: step 4/7. Functionally, involved in the biosynthesis of the chorismate, which leads to the biosynthesis of aromatic amino acids. Catalyzes the reversible NADPH linked reduction of 3-dehydroshikimate (DHSA) to yield shikimate (SA). The polypeptide is Shikimate dehydrogenase (NADP(+)) (Haloarcula marismortui (strain ATCC 43049 / DSM 3752 / JCM 8966 / VKM B-1809) (Halobacterium marismortui)).